The sequence spans 497 residues: 3-octaprenyl-4-hydroxybenzoate carboxy-lyase (497 aa).

Asn-175 contributes to the Mn(2+) binding site. Residues 178 to 180 (IYR), 192 to 194 (RWL), and 197 to 198 (RG) each bind prenylated FMN. Glu-241 is a binding site for Mn(2+). Residue Asp-290 is the Proton donor of the active site.

This sequence belongs to the UbiD family. Homohexamer. Prenylated FMN is required as a cofactor. Mn(2+) serves as cofactor.

The protein resides in the cell membrane. The enzyme catalyses a 4-hydroxy-3-(all-trans-polyprenyl)benzoate + H(+) = a 2-(all-trans-polyprenyl)phenol + CO2. It participates in cofactor biosynthesis; ubiquinone biosynthesis. In terms of biological role, catalyzes the decarboxylation of 3-octaprenyl-4-hydroxy benzoate to 2-octaprenylphenol, an intermediate step in ubiquinone biosynthesis. The chain is 3-octaprenyl-4-hydroxybenzoate carboxy-lyase from Shigella boydii serotype 4 (strain Sb227).